The following is a 303-amino-acid chain: Porphobilinogen deaminase (303 aa).

Cysteine 235 carries the post-translational modification S-(dipyrrolylmethanemethyl)cysteine.

The protein belongs to the HMBS family. In terms of assembly, monomer. The cofactor is dipyrromethane.

It catalyses the reaction 4 porphobilinogen + H2O = hydroxymethylbilane + 4 NH4(+). Its pathway is porphyrin-containing compound metabolism; protoporphyrin-IX biosynthesis; coproporphyrinogen-III from 5-aminolevulinate: step 2/4. Tetrapolymerization of the monopyrrole PBG into the hydroxymethylbilane pre-uroporphyrinogen in several discrete steps. In Campylobacter fetus subsp. fetus (strain 82-40), this protein is Porphobilinogen deaminase.